The chain runs to 434 residues: Homogentisate 1,2-dioxygenase (434 aa).

Catalysis depends on His-289, which acts as the Proton acceptor. His-332 and Glu-338 together coordinate Fe cation. 2 residues coordinate homogentisate: Tyr-347 and His-368. Residue His-368 participates in Fe cation binding.

This sequence belongs to the homogentisate dioxygenase family. Hexamer; dimer of trimers. It depends on Fe cation as a cofactor.

The enzyme catalyses homogentisate + O2 = 4-maleylacetoacetate + H(+). It participates in amino-acid degradation; L-phenylalanine degradation; acetoacetate and fumarate from L-phenylalanine: step 4/6. Its function is as follows. Involved in the catabolism of homogentisate (2,5-dihydroxyphenylacetate or 2,5-OH-PhAc), a central intermediate in the degradation of phenylalanine and tyrosine. Catalyzes the oxidative ring cleavage of the aromatic ring of homogentisate to yield maleylacetoacetate. The sequence is that of Homogentisate 1,2-dioxygenase from Pseudomonas syringae pv. syringae (strain B728a).